Here is a 475-residue protein sequence, read N- to C-terminus: Ribulose bisphosphate carboxylase large chain (475 aa).

Positions 1–2 (MS) are excised as a propeptide. Pro3 carries the post-translational modification N-acetylproline. Lys14 bears the N6,N6,N6-trimethyllysine mark. 2 residues coordinate substrate: Asn123 and Thr173. Lys175 acts as the Proton acceptor in catalysis. Lys177 contacts substrate. Mg(2+)-binding residues include Lys201, Asp203, and Glu204. The residue at position 201 (Lys201) is an N6-carboxylysine. His294 functions as the Proton acceptor in the catalytic mechanism. Residues Arg295, His327, and Ser379 each contribute to the substrate site.

This sequence belongs to the RuBisCO large chain family. Type I subfamily. Heterohexadecamer of 8 large chains and 8 small chains; disulfide-linked. The disulfide link is formed within the large subunit homodimers. Mg(2+) is required as a cofactor. In terms of processing, the disulfide bond which can form in the large chain dimeric partners within the hexadecamer appears to be associated with oxidative stress and protein turnover.

The protein resides in the plastid. It localises to the chloroplast. The enzyme catalyses 2 (2R)-3-phosphoglycerate + 2 H(+) = D-ribulose 1,5-bisphosphate + CO2 + H2O. It carries out the reaction D-ribulose 1,5-bisphosphate + O2 = 2-phosphoglycolate + (2R)-3-phosphoglycerate + 2 H(+). In terms of biological role, ruBisCO catalyzes two reactions: the carboxylation of D-ribulose 1,5-bisphosphate, the primary event in carbon dioxide fixation, as well as the oxidative fragmentation of the pentose substrate in the photorespiration process. Both reactions occur simultaneously and in competition at the same active site. The protein is Ribulose bisphosphate carboxylase large chain of Picea abies (Norway spruce).